Consider the following 692-residue polypeptide: Elongation factor G (692 aa).

Residues 8–282 enclose the tr-type G domain; sequence AKTRNIGIMA…AVIAYLPSPL (275 aa). GTP contacts are provided by residues 17 to 24, 81 to 85, and 135 to 138; these read AHVDAGKT, DTPGH, and NKMD.

The protein belongs to the TRAFAC class translation factor GTPase superfamily. Classic translation factor GTPase family. EF-G/EF-2 subfamily.

The protein resides in the cytoplasm. In terms of biological role, catalyzes the GTP-dependent ribosomal translocation step during translation elongation. During this step, the ribosome changes from the pre-translocational (PRE) to the post-translocational (POST) state as the newly formed A-site-bound peptidyl-tRNA and P-site-bound deacylated tRNA move to the P and E sites, respectively. Catalyzes the coordinated movement of the two tRNA molecules, the mRNA and conformational changes in the ribosome. In Streptococcus pyogenes serotype M1, this protein is Elongation factor G (fus).